We begin with the raw amino-acid sequence, 80 residues long: Clavanin-E (80 aa).

The N-terminal stretch at 1–19 is a signal peptide; it reads MKTTILILLILGLGINAKS. Positions 20–29 are excised as a propeptide; it reads LEERKSEEEK. Position 52 is a phenylalanine amide (phenylalanine 52). Residues 54–80 constitute a propeptide that is removed on maturation; the sequence is DDQQDNGKFYGYYAEDNGKHWYDTGDQ.

It localises to the secreted. In terms of biological role, has antimicrobial activity. This is Clavanin-E from Styela clava (Sea squirt).